Reading from the N-terminus, the 83-residue chain is Small ribosomal subunit protein bS20 (83 aa).

It belongs to the bacterial ribosomal protein bS20 family.

Its function is as follows. Binds directly to 16S ribosomal RNA. In Staphylococcus carnosus (strain TM300), this protein is Small ribosomal subunit protein bS20.